We begin with the raw amino-acid sequence, 81 residues long: ATP synthase subunit c, chloroplastic (81 aa).

The next 2 membrane-spanning stretches (helical) occupy residues 3–23 (AIVS…AAIG) and 57–77 (LAFM…LLFA).

The protein belongs to the ATPase C chain family. In terms of assembly, F-type ATPases have 2 components, F(1) - the catalytic core - and F(0) - the membrane proton channel. F(1) has five subunits: alpha(3), beta(3), gamma(1), delta(1), epsilon(1). F(0) has four main subunits: a(1), b(1), b'(1) and c(10-14). The alpha and beta chains form an alternating ring which encloses part of the gamma chain. F(1) is attached to F(0) by a central stalk formed by the gamma and epsilon chains, while a peripheral stalk is formed by the delta, b and b' chains.

It localises to the plastid. The protein localises to the chloroplast thylakoid membrane. Functionally, f(1)F(0) ATP synthase produces ATP from ADP in the presence of a proton or sodium gradient. F-type ATPases consist of two structural domains, F(1) containing the extramembraneous catalytic core and F(0) containing the membrane proton channel, linked together by a central stalk and a peripheral stalk. During catalysis, ATP synthesis in the catalytic domain of F(1) is coupled via a rotary mechanism of the central stalk subunits to proton translocation. Key component of the F(0) channel; it plays a direct role in translocation across the membrane. A homomeric c-ring of between 10-14 subunits forms the central stalk rotor element with the F(1) delta and epsilon subunits. The polypeptide is ATP synthase subunit c, chloroplastic (Cyanidioschyzon merolae (strain NIES-3377 / 10D) (Unicellular red alga)).